The following is a 150-amino-acid chain: D-aminoacyl-tRNA deacylase (150 aa).

Positions 138 to 139 (GP) match the Gly-cisPro motif, important for rejection of L-amino acids motif.

It belongs to the DTD family. Homodimer.

The protein resides in the cytoplasm. It catalyses the reaction glycyl-tRNA(Ala) + H2O = tRNA(Ala) + glycine + H(+). The enzyme catalyses a D-aminoacyl-tRNA + H2O = a tRNA + a D-alpha-amino acid + H(+). An aminoacyl-tRNA editing enzyme that deacylates mischarged D-aminoacyl-tRNAs. Also deacylates mischarged glycyl-tRNA(Ala), protecting cells against glycine mischarging by AlaRS. Acts via tRNA-based rather than protein-based catalysis; rejects L-amino acids rather than detecting D-amino acids in the active site. By recycling D-aminoacyl-tRNA to D-amino acids and free tRNA molecules, this enzyme counteracts the toxicity associated with the formation of D-aminoacyl-tRNA entities in vivo and helps enforce protein L-homochirality. This chain is D-aminoacyl-tRNA deacylase, found in Petrotoga mobilis (strain DSM 10674 / SJ95).